The sequence spans 592 residues: Aspartate--tRNA ligase (592 aa).

Glutamate 177 is a binding site for L-aspartate. The aspartate stretch occupies residues 201–204; it reads QIFK. Residue arginine 223 coordinates L-aspartate. ATP is bound by residues 223–225 and glutamine 232; that span reads RDE. An L-aspartate-binding site is contributed by histidine 451. Glutamate 485 provides a ligand contact to ATP. Arginine 492 contacts L-aspartate. 537–540 lines the ATP pocket; it reads GLDR.

This sequence belongs to the class-II aminoacyl-tRNA synthetase family. Type 1 subfamily. In terms of assembly, homodimer.

The protein localises to the cytoplasm. It carries out the reaction tRNA(Asp) + L-aspartate + ATP = L-aspartyl-tRNA(Asp) + AMP + diphosphate. Catalyzes the attachment of L-aspartate to tRNA(Asp) in a two-step reaction: L-aspartate is first activated by ATP to form Asp-AMP and then transferred to the acceptor end of tRNA(Asp). The chain is Aspartate--tRNA ligase from Bacillus licheniformis (strain ATCC 14580 / DSM 13 / JCM 2505 / CCUG 7422 / NBRC 12200 / NCIMB 9375 / NCTC 10341 / NRRL NRS-1264 / Gibson 46).